Consider the following 253-residue polypeptide: 5'-nucleotidase SurE (253 aa).

Residues aspartate 8, aspartate 9, serine 39, and asparagine 95 each coordinate a divalent metal cation.

The protein belongs to the SurE nucleotidase family. The cofactor is a divalent metal cation.

The protein resides in the cytoplasm. It carries out the reaction a ribonucleoside 5'-phosphate + H2O = a ribonucleoside + phosphate. Functionally, nucleotidase that shows phosphatase activity on nucleoside 5'-monophosphates. The chain is 5'-nucleotidase SurE from Kosmotoga olearia (strain ATCC BAA-1733 / DSM 21960 / TBF 19.5.1).